A 217-amino-acid polypeptide reads, in one-letter code: Adenylate kinase (217 aa).

Glycine 10 to threonine 15 is a binding site for ATP. The NMP stretch occupies residues serine 30 to valine 59. AMP is bound by residues threonine 31, arginine 36, aspartate 57–valine 59, glycine 85–arginine 88, and glutamine 92. The LID stretch occupies residues glycine 126 to aspartate 163. ATP contacts are provided by residues arginine 127 and threonine 136–tyrosine 137. AMP-binding residues include arginine 160 and arginine 171. Residue glutamine 199 participates in ATP binding.

The protein belongs to the adenylate kinase family. Monomer.

The protein localises to the cytoplasm. It carries out the reaction AMP + ATP = 2 ADP. The protein operates within purine metabolism; AMP biosynthesis via salvage pathway; AMP from ADP: step 1/1. Its function is as follows. Catalyzes the reversible transfer of the terminal phosphate group between ATP and AMP. Plays an important role in cellular energy homeostasis and in adenine nucleotide metabolism. The protein is Adenylate kinase of Shouchella clausii (strain KSM-K16) (Alkalihalobacillus clausii).